The sequence spans 487 residues: Betaine aldehyde dehydrogenase (487 aa).

K(+) is bound by residues S26, I27, and D93. 150 to 152 serves as a coordination point for NAD(+); that stretch reads GAW. The Charge relay system role is filled by K162. NAD(+) is bound by residues 176-179 and 229-232; these read KPSE and SVPT. K(+) is bound at residue L244. E250 functions as the Proton acceptor in the catalytic mechanism. NAD(+) contacts are provided by G252, C284, and E384. C284 acts as the Nucleophile in catalysis. Residue C284 is modified to Cysteine sulfenic acid (-SOH). Positions 454 and 457 each coordinate K(+). The active-site Charge relay system is the E461.

Belongs to the aldehyde dehydrogenase family. Dimer of dimers. Requires K(+) as cofactor.

The catalysed reaction is betaine aldehyde + NAD(+) + H2O = glycine betaine + NADH + 2 H(+). It participates in amine and polyamine biosynthesis; betaine biosynthesis via choline pathway; betaine from betaine aldehyde: step 1/1. Its function is as follows. Involved in the biosynthesis of the osmoprotectant glycine betaine. Catalyzes the irreversible oxidation of betaine aldehyde to the corresponding acid. The protein is Betaine aldehyde dehydrogenase of Sinorhizobium fredii (strain NBRC 101917 / NGR234).